The chain runs to 30 residues: Cyclotide cycloviolacin O17 (30 aa).

A cross-link (cyclopeptide (Gly-Asn)) is located at residues 1–30 (GIPCGESCVWIPCISAAIGCSCKNKVCYRN). 3 cysteine pairs are disulfide-bonded: cysteine 4/cysteine 20, cysteine 8/cysteine 22, and cysteine 13/cysteine 27.

This is a cyclic peptide.

Its function is as follows. Probably participates in a plant defense mechanism. This chain is Cyclotide cycloviolacin O17, found in Psychotria brachyceras.